Consider the following 476-residue polypeptide: Stromelysin-2 (476 aa).

An N-terminal signal peptide occupies residues 1-17 (MMHLAFLVLLCLPVCSA). Residues 18 to 98 (YPLSGAAKEE…PRCGVPDVGH (81 aa)) constitute a propeptide, activation peptide. The Cysteine switch motif lies at 89–96 (PRCGVPDV). The Zn(2+) site is built by cysteine 91, histidine 167, aspartate 169, histidine 182, histidine 195, and histidine 217. Glutamate 218 is a catalytic residue. Residues histidine 221 and histidine 227 each coordinate Zn(2+). Hemopexin repeat units follow at residues 286–335 (PAKC…WPSL), 336–382 (PSYL…GFPP), 384–432 (IRKI…FPGV), and 433–476 (EPKV…WLHC). Cysteines 289 and 476 form a disulfide.

Belongs to the peptidase M10A family. Requires Zn(2+) as cofactor. The cofactor is Ca(2+).

It localises to the secreted. The protein resides in the extracellular space. It is found in the extracellular matrix. The catalysed reaction is Similar to stromelysin 1, but action on collagen types III, IV and V is weak.. Its function is as follows. Can degrade fibronectin, gelatins of type I, III, IV, and V; weakly collagens III, IV, and V. Activates procollagenase. The polypeptide is Stromelysin-2 (MMP10) (Homo sapiens (Human)).